The chain runs to 63 residues: Small ribosomal subunit protein bS21 (63 aa).

It belongs to the bacterial ribosomal protein bS21 family.

The chain is Small ribosomal subunit protein bS21 from Porphyromonas gingivalis (strain ATCC BAA-308 / W83).